The sequence spans 513 residues: Activin receptor type-2A (513 aa).

An N-terminal signal peptide occupies residues 1–19; sequence MGAAAKLAFAVFLISCSSG. The Extracellular segment spans residues 20–135; sequence AILGRSETQE…TSNPVTPKPP (116 aa). 5 disulfides stabilise this stretch: Cys30–Cys60, Cys50–Cys78, Cys85–Cys104, Cys91–Cys103, and Cys105–Cys110. Asn43 and Asn66 each carry an N-linked (GlcNAc...) asparagine glycan. Residues 136–161 traverse the membrane as a helical segment; the sequence is YYNILLYSLVPLMLIAGIVICAFWVY. At 162–513 the chain is on the cytoplasmic side; that stretch reads RHHKMAYPPV…VDFPPKESSL (352 aa). One can recognise a Protein kinase domain in the interval 192-485; that stretch reads LQLLEVKARG…GERITQMQRL (294 aa). Residues 198–206 and Lys219 contribute to the ATP site; that span reads KARGRFGCV. The active-site Proton acceptor is Asp322.

It belongs to the protein kinase superfamily. TKL Ser/Thr protein kinase family. TGFB receptor subfamily. Part of a complex consisting of MAGI2/ARIP1, ACVR2A, ACVR1B and SMAD3. Interacts with MAGI2/ARIP1. Interacts with type I receptor ACVR1. Interacts with BMP7. Interacts with TSC22D1/TSC-22. Interacts with activin A/INHBA. Mg(2+) is required as a cofactor. Requires Mn(2+) as cofactor.

The protein localises to the cell membrane. It carries out the reaction L-threonyl-[receptor-protein] + ATP = O-phospho-L-threonyl-[receptor-protein] + ADP + H(+). The catalysed reaction is L-seryl-[receptor-protein] + ATP = O-phospho-L-seryl-[receptor-protein] + ADP + H(+). Its function is as follows. On ligand binding, forms a receptor complex consisting of two type II and two type I transmembrane serine/threonine kinases. Type II receptors phosphorylate and activate type I receptors which autophosphorylate, then bind and activate SMAD transcriptional regulators. Receptor for activin A, activin B and inhibin A. Mediates induction of adipogenesis by GDF6. In Homo sapiens (Human), this protein is Activin receptor type-2A.